We begin with the raw amino-acid sequence, 377 residues long: Nitric oxide reductase FlRd-NAD(+) reductase (377 aa).

Belongs to the FAD-dependent oxidoreductase family. It depends on FAD as a cofactor.

The protein resides in the cytoplasm. It carries out the reaction 2 reduced [nitric oxide reductase rubredoxin domain] + NAD(+) + H(+) = 2 oxidized [nitric oxide reductase rubredoxin domain] + NADH. The protein operates within nitrogen metabolism; nitric oxide reduction. One of at least two accessory proteins for anaerobic nitric oxide (NO) reductase. Reduces the rubredoxin moiety of NO reductase. The chain is Nitric oxide reductase FlRd-NAD(+) reductase from Shigella flexneri serotype 5b (strain 8401).